The chain runs to 235 residues: Probable GTP-binding protein EngB (235 aa).

In terms of domain architecture, EngB-type G spans 23-219 (QVPEIAFAGR…NDKIIELLGL (197 aa)). GTP-binding positions include 31–38 (GRSNAGKS), 58–62 (GRTQH), 92–95 (DLPG), 159–162 (TKSD), and 193–200 (FTAQMFSA). Ser-38 and Thr-60 together coordinate Mg(2+).

The protein belongs to the TRAFAC class TrmE-Era-EngA-EngB-Septin-like GTPase superfamily. EngB GTPase family. Mg(2+) is required as a cofactor.

Its function is as follows. Necessary for normal cell division and for the maintenance of normal septation. In Janthinobacterium sp. (strain Marseille) (Minibacterium massiliensis), this protein is Probable GTP-binding protein EngB.